The sequence spans 143 residues: MSRNRLFLVAGSLAVAAAVSLISGITLLNRDVGSYIASHYRQESRDVNGTRYLCTGSPKQVATTLVKYQTPAARASHTDTEYLRYRNNIVTVGPDGTYPCIIRVENLSAGYNHGAYVFLGPGFTPGSPSGGSGGSPGGPGGSK.

An N-terminal signal peptide occupies residues 1–16 (MSRNRLFLVAGSLAVA). The chain crosses the membrane as a helical span at residues 114–134 (GAYVFLGPGFTPGSPSGGSGG).

It is found in the membrane. This is an uncharacterized protein from Mycobacterium tuberculosis (strain CDC 1551 / Oshkosh).